A 258-amino-acid polypeptide reads, in one-letter code: UDP-2,3-diacylglucosamine hydrolase (258 aa).

Asp-15, His-17, Asp-48, Asn-88, and His-123 together coordinate Mn(2+). 88-89 is a substrate binding site; the sequence is NR. 5 residues coordinate substrate: Asp-131, Ser-169, Asn-173, Lys-176, and His-204. Positions 204 and 206 each coordinate Mn(2+).

This sequence belongs to the LpxH family. It depends on Mn(2+) as a cofactor.

The protein resides in the cell inner membrane. The catalysed reaction is UDP-2-N,3-O-bis[(3R)-3-hydroxytetradecanoyl]-alpha-D-glucosamine + H2O = 2-N,3-O-bis[(3R)-3-hydroxytetradecanoyl]-alpha-D-glucosaminyl 1-phosphate + UMP + 2 H(+). It functions in the pathway glycolipid biosynthesis; lipid IV(A) biosynthesis; lipid IV(A) from (3R)-3-hydroxytetradecanoyl-[acyl-carrier-protein] and UDP-N-acetyl-alpha-D-glucosamine: step 4/6. Functionally, hydrolyzes the pyrophosphate bond of UDP-2,3-diacylglucosamine to yield 2,3-diacylglucosamine 1-phosphate (lipid X) and UMP by catalyzing the attack of water at the alpha-P atom. Involved in the biosynthesis of lipid A, a phosphorylated glycolipid that anchors the lipopolysaccharide to the outer membrane of the cell. The polypeptide is UDP-2,3-diacylglucosamine hydrolase (Bordetella bronchiseptica (strain ATCC BAA-588 / NCTC 13252 / RB50) (Alcaligenes bronchisepticus)).